A 167-amino-acid polypeptide reads, in one-letter code: SsrA-binding protein (167 aa).

Basic and acidic residues predominate over residues 139-158; sequence QNHDKRDAAKERDWQRDKQR. The segment at 139–167 is disordered; the sequence is QNHDKRDAAKERDWQRDKQRVMRRHNRDA.

This sequence belongs to the SmpB family.

The protein resides in the cytoplasm. Required for rescue of stalled ribosomes mediated by trans-translation. Binds to transfer-messenger RNA (tmRNA), required for stable association of tmRNA with ribosomes. tmRNA and SmpB together mimic tRNA shape, replacing the anticodon stem-loop with SmpB. tmRNA is encoded by the ssrA gene; the 2 termini fold to resemble tRNA(Ala) and it encodes a 'tag peptide', a short internal open reading frame. During trans-translation Ala-aminoacylated tmRNA acts like a tRNA, entering the A-site of stalled ribosomes, displacing the stalled mRNA. The ribosome then switches to translate the ORF on the tmRNA; the nascent peptide is terminated with the 'tag peptide' encoded by the tmRNA and targeted for degradation. The ribosome is freed to recommence translation, which seems to be the essential function of trans-translation. The protein is SsrA-binding protein of Xanthomonas oryzae pv. oryzae (strain PXO99A).